Reading from the N-terminus, the 94-residue chain is Co-chaperonin GroES (94 aa).

Belongs to the GroES chaperonin family. In terms of assembly, heptamer of 7 subunits arranged in a ring. Interacts with the chaperonin GroEL.

It is found in the cytoplasm. Functionally, together with the chaperonin GroEL, plays an essential role in assisting protein folding. The GroEL-GroES system forms a nano-cage that allows encapsulation of the non-native substrate proteins and provides a physical environment optimized to promote and accelerate protein folding. GroES binds to the apical surface of the GroEL ring, thereby capping the opening of the GroEL channel. The polypeptide is Co-chaperonin GroES (Desulfitobacterium hafniense (strain DSM 10664 / DCB-2)).